Reading from the N-terminus, the 396-residue chain is MAKAKFERNKPHVNVGTIGHVDHGKTTLTAAIATICAKTYGGEAKDYSQIDSAPEEKARGITINTSHVEYDSPTRHYAHVDCPGHADYVKNMITGAAQMDGAILVCAATDGPMPQTREHILLSRQVGVPYIIVFLNKCDLVDDEELLELVEMEVRELLSTYDFPGDDTPVIRGSALAALNGEAGPYGEESVLALVAALDSYIPEPERAIDKAFLMPIEDVFSISGRGTVVTGRVEAGIIKVGEEVEIVGIKDTVKTTVTGVEMFRKLLDEGRAGENCGILLRGTKREEVQRGQVLAKPGTIKPHTKFDAEVYVLSKEEGGRHTPFLNGYRPQFYFRTTDVTGAIQLKEGVEMVMPGDNVEMSVELIHPIAMDPGLRFAIREGGRTVGAGVVAKVTA.

The tr-type G domain occupies 10-206; sequence KPHVNVGTIG…ALDSYIPEPE (197 aa). The interval 19-26 is G1; sequence GHVDHGKT. 19 to 26 provides a ligand contact to GTP; that stretch reads GHVDHGKT. Residue T26 coordinates Mg(2+). Positions 60–64 are G2; the sequence is GITIN. The tract at residues 81-84 is G3; the sequence is DCPG. GTP is bound by residues 81-85 and 136-139; these read DCPGH and NKCD. The G4 stretch occupies residues 136–139; sequence NKCD. Positions 174-176 are G5; the sequence is SAL.

Belongs to the TRAFAC class translation factor GTPase superfamily. Classic translation factor GTPase family. EF-Tu/EF-1A subfamily. As to quaternary structure, monomer.

Its subcellular location is the cytoplasm. The catalysed reaction is GTP + H2O = GDP + phosphate + H(+). In terms of biological role, GTP hydrolase that promotes the GTP-dependent binding of aminoacyl-tRNA to the A-site of ribosomes during protein biosynthesis. In Acinetobacter baumannii (strain ATCC 17978 / DSM 105126 / CIP 53.77 / LMG 1025 / NCDC KC755 / 5377), this protein is Elongation factor Tu.